Consider the following 1373-residue polypeptide: Poly(A) RNA polymerase gld-2 homolog B (1373 aa).

A compositionally biased stretch (low complexity) spans 75–91 (NSCHSSNSSSNTSNNNN). Disordered regions lie at residues 75–155 (NSCH…QEKQ), 175–340 (SDCK…FWKT), 425–543 (PDST…QQQK), 734–770 (PQQQQQQQLSSHPIPTGTSSHPPPPPPPHMFFHFADG), 802–866 (CGSG…ALGS), and 880–928 (HPLH…PTPV). The span at 96 to 112 (GQQQQPLHYCNSNNSHS) shows a compositional bias: polar residues. Low complexity-rich tracts occupy residues 130–152 (QQQQQPSSFFQRQQQQHQMQMQQ), 180–219 (SDSNNNSTSSSNNNSTISSNNNNTSSASNNNTGSSSSCSN), 228–251 (NENSSSSSSSNNNNISCRNNNTSS), and 274–284 (ESGSSEGAAES). Composition is skewed to polar residues over residues 295 to 340 (CNSN…FWKT) and 430 to 442 (KSSSNTGGSNMIR). A compositionally biased stretch (low complexity) spans 443 to 485 (SSSNGNSNFSRHQYGHQSTGSGYQQQQQRYRNAQNVYQQYQHQ). The span at 486 to 502 (QQHHAQQHTHPHFRRKH) shows a compositional bias: basic residues. Low complexity-rich tracts occupy residues 735–753 (QQQQQQQLSSHPIPTGTSS) and 819–844 (AGALRPASPALSSSSLGSESQWSGTS). The span at 855-866 (PSISPTPSALGS) shows a compositional bias: polar residues. Low complexity predominate over residues 880 to 890 (HPLHQQHPPSH). The segment at 945-1373 (RYLAQARNIE…FAETTAAHVA (429 aa)) is sufficent for interaction with Dcr-2. Positions 1029 and 1031 each coordinate Mg(2+). The PAP-associated domain occupies 1211 to 1272 (TLGEHLLGFF…NIEEPFDLSN (62 aa)). Over residues 1320-1341 (LQQHQQQFEQQLHHPISGQQRS) the composition is skewed to low complexity. The disordered stretch occupies residues 1320-1359 (LQQHQQQFEQQLHHPISGQQRSAGGGGDGANPVPSTLNPD).

It belongs to the DNA polymerase type-B-like family. GLD2 subfamily. Interacts with orb, an RNA-binding protein, generating an ovarian cytoplasmic polyadenylation complex. Interacts (via C-terminus) with Dcr-2. The cofactor is Mg(2+). Mn(2+) serves as cofactor. Expressed in ovaries. Not expressed in adult males.

It is found in the cytoplasm. It catalyses the reaction RNA(n) + ATP = RNA(n)-3'-adenine ribonucleotide + diphosphate. Functionally, cytoplasmic poly(A) RNA polymerase that adds successive AMP monomers to the 3'-end of specific maternal RNAs (bcd, Tl, and tor), forming a poly(A) tail, during late oogenesis and early embryogenesis. In contrast to the canonical nuclear poly(A) RNA polymerase, it only adds poly(A) to selected cytoplasmic mRNAs. Required for localization of mRNAs to both poles of the egg, to recruit or maintain known centrosomal proteins with two types of microtubule organizing centers (MTOCs): the central MTOC that forms between the meiosis II tandem spindles and the centrosomes of the mitotic spindle. Required at the final stage of oogenesis for meiosis I metaphase arrest and for progression beyond this stage. Functions with the RNA-binding protein Dcr-2 to promote cytoplasmic polyadenylation and translational activation of certain mRNAs such as Tl and r2d2. As a consequence, is involved in regulating Toll immune signaling and promoting resistance to fungal infection. The protein is Poly(A) RNA polymerase gld-2 homolog B (wisp) of Drosophila melanogaster (Fruit fly).